A 414-amino-acid polypeptide reads, in one-letter code: L-cysteine:1D-myo-inositol 2-amino-2-deoxy-alpha-D-glucopyranoside ligase (414 aa).

Cysteine 44 is a Zn(2+) binding site. L-cysteinyl-5'-AMP contacts are provided by residues 44 to 47 (CGIT), threonine 59, and 82 to 84 (NIT). Residues 46–56 (ITPYDSTHLGH) carry the 'HIGH' region motif. A 'ERGGDP' region motif is present at residues 188 to 193 (ERGGDP). Tryptophan 228 lines the L-cysteinyl-5'-AMP pocket. Residue cysteine 232 coordinates Zn(2+). Residue 250-252 (GSD) participates in L-cysteinyl-5'-AMP binding. Histidine 257 is a binding site for Zn(2+). An L-cysteinyl-5'-AMP-binding site is contributed by isoleucine 284. A 'KMSKS' region motif is present at residues 290-294 (KMSKS).

This sequence belongs to the class-I aminoacyl-tRNA synthetase family. MshC subfamily. Monomer. It depends on Zn(2+) as a cofactor.

It catalyses the reaction 1D-myo-inositol 2-amino-2-deoxy-alpha-D-glucopyranoside + L-cysteine + ATP = 1D-myo-inositol 2-(L-cysteinylamino)-2-deoxy-alpha-D-glucopyranoside + AMP + diphosphate + H(+). Its function is as follows. Catalyzes the ATP-dependent condensation of GlcN-Ins and L-cysteine to form L-Cys-GlcN-Ins. The chain is L-cysteine:1D-myo-inositol 2-amino-2-deoxy-alpha-D-glucopyranoside ligase (mshC) from Corynebacterium diphtheriae (strain ATCC 700971 / NCTC 13129 / Biotype gravis).